A 122-amino-acid chain; its full sequence is Large ribosomal subunit protein bL12 (122 aa).

This sequence belongs to the bacterial ribosomal protein bL12 family. As to quaternary structure, homodimer. Part of the ribosomal stalk of the 50S ribosomal subunit. Forms a multimeric L10(L12)X complex, where L10 forms an elongated spine to which 2 to 4 L12 dimers bind in a sequential fashion. Binds GTP-bound translation factors.

Functionally, forms part of the ribosomal stalk which helps the ribosome interact with GTP-bound translation factors. Is thus essential for accurate translation. The sequence is that of Large ribosomal subunit protein bL12 from Mycoplasma pneumoniae (strain ATCC 29342 / M129 / Subtype 1) (Mycoplasmoides pneumoniae).